A 144-amino-acid chain; its full sequence is Large ribosomal subunit protein uL11 (144 aa).

The protein belongs to the universal ribosomal protein uL11 family. As to quaternary structure, part of the ribosomal stalk of the 50S ribosomal subunit. Interacts with L10 and the large rRNA to form the base of the stalk. L10 forms an elongated spine to which L12 dimers bind in a sequential fashion forming a multimeric L10(L12)X complex. Post-translationally, one or more lysine residues are methylated.

Forms part of the ribosomal stalk which helps the ribosome interact with GTP-bound translation factors. This Rhodococcus opacus (strain B4) protein is Large ribosomal subunit protein uL11.